We begin with the raw amino-acid sequence, 273 residues long: Large ribosomal subunit protein uL29m (273 aa).

Over residues 247 to 258 (PLRHDRWEKGQE) the composition is skewed to basic and acidic residues. Positions 247 to 273 (PLRHDRWEKGQEENSGGETEDGNAPSN) are disordered.

Belongs to the universal ribosomal protein uL29 family. As to quaternary structure, component of the mitochondrial large ribosomal subunit. Mature mitochondrial ribosomes consist of a small (37S) and a large (54S) subunit. The 37S subunit contains at least 33 different proteins and 1 molecule of RNA (15S). The 54S subunit contains at least 45 different proteins and 1 molecule of RNA (21S).

Its subcellular location is the mitochondrion. The polypeptide is Large ribosomal subunit protein uL29m (mrpl4) (Aspergillus niger (strain ATCC MYA-4892 / CBS 513.88 / FGSC A1513)).